The sequence spans 266 residues: Undecaprenyl-diphosphatase (266 aa).

A run of 8 helical transmembrane segments spans residues 2–22 (INIL…FLPI), 39–59 (LPII…IIYY), 86–106 (LKLI…GTFI), 112–132 (MFIL…ILML), 145–165 (ILLV…PGIS), 184–204 (AFEI…LFKY), 212–232 (MVLN…VGII), and 246–266 (LYYF…FFRI).

Belongs to the UppP family.

The protein localises to the cell inner membrane. The catalysed reaction is di-trans,octa-cis-undecaprenyl diphosphate + H2O = di-trans,octa-cis-undecaprenyl phosphate + phosphate + H(+). Its function is as follows. Catalyzes the dephosphorylation of undecaprenyl diphosphate (UPP). Confers resistance to bacitracin. The sequence is that of Undecaprenyl-diphosphatase from Borrelia garinii subsp. bavariensis (strain ATCC BAA-2496 / DSM 23469 / PBi) (Borreliella bavariensis).